A 343-amino-acid polypeptide reads, in one-letter code: Ubiquitin thioesterase OTU1 (343 aa).

The interval 45 to 123 (RCKAKGGTHV…IVEEDQTRPK (79 aa)) is UBX-like. The region spanning 144 to 269 (LTRTAVPADN…GIHYDPLQRN (126 aa)) is the OTU domain. The tract at residues 149-155 (VPADNSC) is cys-loop. Aspartate 152 is a catalytic residue. Catalysis depends on cysteine 155, which acts as the Nucleophile. The tract at residues 208–218 (IRRDDTWGGAI) is variable-loop. Positions 258–262 (YDGIH) are his-loop. Isoleucine 261 serves as a coordination point for substrate. Residue histidine 262 is part of the active site. Positions 286 to 291 (DIVLVQ) are S2 site. The segment at 313–337 (LRCMLCQKGLTGQAEARDHARETGH) adopts a C2H2-type zinc-finger fold. Residue histidine 337 is part of the active site.

Interacts with VCP; the interaction is direct. Interacts with FAF2/UBXD8. Interacts with DERL1; however interaction is dependent on the UBAX-like region, suggesting that it may be indirect. Interacts with PLAA, UBXN6 and VCP; may form a complex involved in macroautophagy.

Its subcellular location is the cytoplasm. It carries out the reaction Thiol-dependent hydrolysis of ester, thioester, amide, peptide and isopeptide bonds formed by the C-terminal Gly of ubiquitin (a 76-residue protein attached to proteins as an intracellular targeting signal).. Hydrolase that can remove conjugated ubiquitin from proteins and participates in endoplasmic reticulum-associated degradation (ERAD) for misfolded lumenal proteins. May act by triming the ubiquitin chain on the associated substrate to facilitate their threading through the VCP/p97 pore. Ubiquitin moieties on substrates may present a steric impediment to the threading process when the substrate is transferred to the VCP pore and threaded through VCP's axial channel. Mediates deubiquitination of 'Lys-27'-, 'Lys-29'- and 'Lys-33'-linked polyubiquitin chains. Also able to hydrolyze 'Lys-11'-linked ubiquitin chains. Cleaves both polyubiquitin and di-ubiquitin. May play a role in macroautophagy, regulating for instance the clearance of damaged lysosomes. May recruit PLAA, UBXN6 and VCP to damaged lysosome membranes decorated with K48-linked ubiquitin chains and remove these chains allowing autophagosome formation. The protein is Ubiquitin thioesterase OTU1 (Yod1) of Rattus norvegicus (Rat).